The primary structure comprises 40 residues: Small polypeptide DEVIL 3 (40 aa).

The required for DVL/RTFL small polypeptide activity stretch occupies residues 9 to 40 (PCNKKLGGYLKEQKGRLYIIRRCVVMLICWHD). The helical transmembrane segment at 12 to 28 (KKLGGYLKEQKGRLYII) threads the bilayer.

It belongs to the DVL/RTFL small polypeptides family. As to expression, mostly expressed in flowers and stems, and, to a lower extent, in roots and leaves.

It is found in the cell membrane. Functionally, small polypeptide acting as a regulatory molecule which coordinates cellular responses required for differentiation, growth and development, including leaves shape, pedicule elongation, inflorescence organization and fruit maturation, probably by restricting polar cell proliferation in lateral organs and coordinating socket cell recruitment and differentiation at trichome sites. The protein is Small polypeptide DEVIL 3 of Arabidopsis thaliana (Mouse-ear cress).